Here is a 499-residue protein sequence, read N- to C-terminus: Lysine--tRNA ligase (499 aa).

Positions 408 and 415 each coordinate Mg(2+).

Belongs to the class-II aminoacyl-tRNA synthetase family. Homodimer. Requires Mg(2+) as cofactor.

It is found in the cytoplasm. It carries out the reaction tRNA(Lys) + L-lysine + ATP = L-lysyl-tRNA(Lys) + AMP + diphosphate. This chain is Lysine--tRNA ligase, found in Bacillus cereus (strain ATCC 10987 / NRS 248).